Here is a 324-residue protein sequence, read N- to C-terminus: AT-hook motif nuclear-localized protein 24 (324 aa).

The span at 1 to 12 shows a compositional bias: polar residues; sequence MDPVQSHGSQSS. Disordered stretches follow at residues 1–122 and 262–324; these read MDPV…KPPI and MQTP…RPPY. The segment covering 24–33 has biased composition (low complexity); it reads LHLQQQQQEF. The segment covering 69-79 has biased composition (polar residues); sequence NIDNIANNSGS. The span at 88–99 shows a compositional bias: gly residues; sequence GGSGEGGGGSGG. A DNA-binding region (a.T hook) is located at residues 105–117; it reads RRPRGRPAGSKNK. The region spanning 129–268 is the PPC domain; the sequence is ANALRTHVME…EDEMQTPVHG (140 aa). Residues 280-297 show a composition bias toward low complexity; the sequence is MMGQQLQHQQQAMSGHQG. Positions 304–318 are enriched in polar residues; the sequence is GSVQLQQQHDQSYWS.

It is found in the nucleus. In terms of biological role, transcription factor that specifically binds AT-rich DNA sequences related to the nuclear matrix attachment regions (MARs). The sequence is that of AT-hook motif nuclear-localized protein 24 from Arabidopsis thaliana (Mouse-ear cress).